We begin with the raw amino-acid sequence, 379 residues long: Transcription termination factor 1b, mitochondrial (379 aa).

Residues 1-37 (MASRNIWCVRRNFLFDLRGWMLQYSAEVFLKSISFRT) constitute a mitochondrion transit peptide. Interaction with DNA stretches follow at residues 151–152 (RS), 229–233 (QSTKR), 306–313 (SEKKFNDK), 337–340 (SINT), and 366–373 (SQRRYEAK).

Belongs to the mTERF family. Monomer. Phosphoprotein with mostly four phosphate groups. While the DNA-binding activity is unaffected by the phosphorylation state, only the phosphorylated form of the protein is active for termination activity. Functioning seems to be regulated by phosphorylation. Expressed strongly in the heart and at lower levels in brain, liver and kidney.

It localises to the mitochondrion. Functionally, transcription termination factor. Binds to a 28 bp region within the tRNA(Leu(uur)) gene at a position immediately adjacent to and downstream of the 16S rRNA gene; this region comprises a tridecamer sequence critical for directing accurate termination. Binds DNA along the major grove and promotes DNA bending and partial unwinding. Promotes base flipping. Transcription termination activity appears to be polarized with highest specificity for transcripts initiated on the light strand. This chain is Transcription termination factor 1b, mitochondrial, found in Mus musculus (Mouse).